The sequence spans 192 residues: Epididymal-specific lipocalin-5 (192 aa).

The N-terminal stretch at 1 to 26 (MCSVARHMESIMLFTLLGLCVGLAAG) is a signal peptide. A disulfide bond links Cys89 and Cys183.

The protein belongs to the calycin superfamily. Lipocalin family. 2 different forms with differently processed N-termini exist. In terms of tissue distribution, epididymal fluid of the caudal and corpus regions (at protein level).

Its subcellular location is the secreted. Functionally, associates with spermatozoa in the epididymal fluid but does not bind tightly to them. Binds both all-trans and 13-cis retinoic acid. May act as a retinoid carrier protein which is required for epididymal function and/or sperm maturation. This chain is Epididymal-specific lipocalin-5, found in Mus musculus (Mouse).